The sequence spans 459 residues: Putrescine aminotransferase (459 aa).

Pyridoxal 5'-phosphate is bound by residues 150 to 151 (GT) and glutamine 274. N6-(pyridoxal phosphate)lysine is present on lysine 300. Threonine 332 contributes to the pyridoxal 5'-phosphate binding site.

Belongs to the class-III pyridoxal-phosphate-dependent aminotransferase family. Putrescine aminotransferase subfamily. Requires pyridoxal 5'-phosphate as cofactor.

It carries out the reaction an alkane-alpha,omega-diamine + 2-oxoglutarate = an omega-aminoaldehyde + L-glutamate. The enzyme catalyses putrescine + 2-oxoglutarate = 1-pyrroline + L-glutamate + H2O. It catalyses the reaction cadaverine + 2-oxoglutarate = 5-aminopentanal + L-glutamate. It participates in amine and polyamine degradation; putrescine degradation; 4-aminobutanal from putrescine (transaminase route): step 1/1. Catalyzes the aminotransferase reaction from putrescine to 2-oxoglutarate, leading to glutamate and 4-aminobutanal, which spontaneously cyclizes to form 1-pyrroline. This is the first step in one of two pathways for putrescine degradation, where putrescine is converted into 4-aminobutanoate (gamma-aminobutyrate or GABA) via 4-aminobutanal. Also functions as a cadaverine transaminase in a a L-lysine degradation pathway to succinate that proceeds via cadaverine, glutarate and L-2-hydroxyglutarate. The protein is Putrescine aminotransferase of Escherichia coli O6:K15:H31 (strain 536 / UPEC).